The chain runs to 50 residues: Light-harvesting protein B-870 beta chain (50 aa).

Over 2–22 (ADNTDLSFTGLTDEQAQELHS) the chain is Cytoplasmic. A bacteriochlorophyll is bound by residues His21 and His39. Residues 23 to 45 (VYMSGLFLFAAVAVVAHLATYIW) traverse the membrane as a helical segment. Residues 46–50 (RPWFG) lie on the Periplasmic side of the membrane.

Belongs to the antenna complex beta subunit family. As to quaternary structure, the core complex is formed by different alpha and beta chains, binding bacteriochlorophyll molecules, and arranged most probably in tetrameric structures disposed around the reaction center. The non-pigmented gamma chains may constitute additional components.

The protein resides in the cell inner membrane. Antenna complexes are light-harvesting systems, which transfer the excitation energy to the reaction centers. The protein is Light-harvesting protein B-870 beta chain (pufB) of Roseobacter denitrificans (strain ATCC 33942 / OCh 114) (Erythrobacter sp. (strain OCh 114)).